The primary structure comprises 709 residues: MNPIVKQFKYGQHTVTLETGAIARQATAAVMASMDDTTVFVTVVAKKDVKEGQDFFPLTVNYQERTYAAGKIPGGFFKREGRPSEGETLIARLIDRPIRPLFPEGFFNEIQVVATVVSVNPQISPDLVAMIGASAALTLSGVPFNGPIGAARVGFIDNQFVLNPTMAEQKQSRLDLVVAGTDKAVLMVESEADILTEEQMLAAVVFGHQQQQVVIEAVKEFAKEAGKPRWDWVAPQPNTDLINKVKAIAEARLGDAYRITEKQARYEQIDAIKADVIAQITAEDEEISESKIVDIFTALESQIVRGRIIAGEPRIDGRTVDTVRALDICTGVLPRTHGSAIFTRGETQALAVATLGTERDAQIIDELTGERQDHFLFHYNFPPYSVGETGMIGSPKRREIGHGRLAKRGVAAVMPSLAEFPYVVRVVSEITESNGSSSMASVCGASLALMDAGVPIKAAVAGIAMGLVKEEEKFVVLSDILGDEDHLGDMDFKVAGTREGVTALQMDIKIEGITPEIMQIALNQAKSARMHILGVMEQAIPAPRADISDYAPRIYTMKIDPKKIKDVIGKGGATIRSLTEETGTSIDIDDDGTVKIAAVDSNAAKNVMGRIEEIVAEVEAGAIYKGKVTRLADFGAFVAIVGNKEGLVHISQIAEERVEKVSDYLQVGQEVNVKVVEIDRQGRIRLTMKDLAPKQETEINQEDPVEEQE.

Mg(2+) is bound by residues Asp485 and Asp491. The region spanning 552–611 (PRIYTMKIDPKKIKDVIGKGGATIRSLTEETGTSIDIDDDGTVKIAAVDSNAAKNVMGRI) is the KH domain. One can recognise an S1 motif domain in the interval 621 to 689 (GAIYKGKVTR…RQGRIRLTMK (69 aa)).

Belongs to the polyribonucleotide nucleotidyltransferase family. In terms of assembly, component of the RNA degradosome, which is a multiprotein complex involved in RNA processing and mRNA degradation. Mg(2+) serves as cofactor.

It localises to the cytoplasm. It carries out the reaction RNA(n+1) + phosphate = RNA(n) + a ribonucleoside 5'-diphosphate. In terms of biological role, involved in mRNA degradation. Catalyzes the phosphorolysis of single-stranded polyribonucleotides processively in the 3'- to 5'-direction. The polypeptide is Polyribonucleotide nucleotidyltransferase (Haemophilus influenzae (strain 86-028NP)).